We begin with the raw amino-acid sequence, 685 residues long: Dammaradiene synthase (685 aa).

PFTB repeat units lie at residues 82-123 (MDKM…RLLN) and 265-308 (IREA…DPVV). The active-site Proton donor is Asp400. 2 PFTB repeats span residues 424–465 (ITRC…KAMV) and 621–672 (IGHG…ARYR).

It belongs to the terpene cyclase/mutase family.

The enzyme catalyses squalene = dammara-20,24-diene. In terms of biological role, squalene cyclase producing the tetracyclic triterpene dammaradiene. This is Dammaradiene synthase (DCD) from Dryopteris crassirhizoma (Thick stemmed wood fern).